We begin with the raw amino-acid sequence, 277 residues long: MDLLTLFKVLILGAVEGLTEFLPISSTGHQIIVADLLEFGGERAMAFNIIIQLGAILAVVWEFRPKIFEIVKGLPTQSNAQRFTRNLLIAFFPAVILGVLFADTIHEYLFNPITVAVALVVGGIVMLWAEQRDHVVSVDHVDDMKWADALKIGCVQCLAMIPGTSRSGSTIIGGLLFGLSRKAATEFSFFLAMPTMVGAAVYSGYKYRELFQSSDLPVFALGFVVAFIFAMIAVRGLLKFIANHSYATFAWYRIAFGLLILATWQFGWVNWTAAAAA.

6 consecutive transmembrane segments (helical) span residues Arg-43–Phe-63, Leu-87–Glu-107, Leu-109–Ala-129, Ala-183–Ser-203, Ser-214–Val-234, and Ile-254–Ala-274.

Belongs to the UppP family.

Its subcellular location is the cell inner membrane. It catalyses the reaction di-trans,octa-cis-undecaprenyl diphosphate + H2O = di-trans,octa-cis-undecaprenyl phosphate + phosphate + H(+). In terms of biological role, catalyzes the dephosphorylation of undecaprenyl diphosphate (UPP). Confers resistance to bacitracin. In Pseudomonas fluorescens (strain Pf0-1), this protein is Undecaprenyl-diphosphatase 2.